The sequence spans 798 residues: MALQMFVTYSPWNCLLLLVALECSEASSDLNESANSTAQYASNAWFAAASSEPEEGISVFELDYDYVQIPYEVTLWILLASLAKIGFHLYHRLPGLMPESCLLILVGALVGGIIFGTDHKSPPVMDSSIYFLYLLPPIVLEGGYFMPTRPFFENIGSILWWAVLGALINALGIGLSLYLICQVKAFGLGDVNLLQNLLFGSLISAVDPVAVLAVFEEARVNEQLYMMIFGEALLNDGITVVLYNMLIAFTKMHKFEDIETVDILAGCARFIVVGLGGVLFGIVFGFISAFITRFTQNISAIEPLIVFMFSYLSYLAAETLYLSGILAITACAVTMKKYVEENVSQTSYTTIKYFMKMLSSVSETLIFIFMGVSTVGKNHEWNWAFICFTLAFCQIWRAISVFALFYISNQFRTFPFSIKDQCIIFYSGVRGAGSFSLAFLLPLSLFPRKKMFVTATLVVIYFTVFIQGITVGPLVRYLDVKKTNKKESINEELHIRLMDHLKAGIEDVCGHWSHYQVRDKFKKFDHRYLRKILIRKNLPKSSIVSLYKKLEMKQAIEMVETGILSSTAFSIPHQAQRIQGIKRLSPEDVESIRDILTSNMYQVRQRTLSYNKYNLKPQTSEKQAKEILIRRQNTLRESMRKGHSLPWGKPAGTKNIRYLSYPYGNPQSAGRDTRAAGFSDDDSSDPGSPSITFSACSRIGSLQKQEAQEIIPMKSLHRGRKAFSFGYQRNTSQEEYLGGVRRVALRPKPLFHAVDEEGESGGESEGKASLVEVRSRWTADHGHGRDHHRSHSPLLQKK.

Over 1-13 (MALQMFVTYSPWN) the chain is Cytoplasmic. An intramembrane region (name=A/M1) is located at residues 14–28 (CLLLLVALECSEASS). Topologically, residues 29–69 (DLNESANSTAQYASNAWFAAASSEPEEGISVFELDYDYVQI) are cytoplasmic. An intramembrane region (name=B/M2) is located at residues 70–90 (PYEVTLWILLASLAKIGFHLY). Topologically, residues 91–94 (HRLP) are cytoplasmic. The helical transmembrane segment at 95–115 (GLMPESCLLILVGALVGGIIF) threads the bilayer. Residues 116–127 (GTDHKSPPVMDS) lie on the Extracellular side of the membrane. Residues 128–148 (SIYFLYLLPPIVLEGGYFMPT) form a helical membrane-spanning segment. The Cytoplasmic portion of the chain corresponds to 149 to 154 (RPFFEN). A helical membrane pass occupies residues 155–175 (IGSILWWAVLGALINALGIGL). The Extracellular portion of the chain corresponds to 176–196 (SLYLICQVKAFGLGDVNLLQN). Residues 197-217 (LLFGSLISAVDPVAVLAVFEE) form a helical membrane-spanning segment. Residues 218 to 226 (ARVNEQLYM) are Cytoplasmic-facing. The chain crosses the membrane as a helical span at residues 227-247 (MIFGEALLNDGITVVLYNMLI). The Extracellular segment spans residues 248-270 (AFTKMHKFEDIETVDILAGCARF). Residues 271–291 (IVVGLGGVLFGIVFGFISAFI) form a helical membrane-spanning segment. Residues 292-304 (TRFTQNISAIEPL) are Cytoplasmic-facing. Residues 305–325 (IVFMFSYLSYLAAETLYLSGI) traverse the membrane as a helical segment. At 326–356 (LAITACAVTMKKYVEENVSQTSYTTIKYFMK) the chain is on the extracellular side. N-linked (GlcNAc...) asparagine glycosylation occurs at asparagine 342. The chain crosses the membrane as a helical span at residues 357 to 373 (MLSSVSETLIFIFMGVS). At 374–384 (TVGKNHEWNWA) the chain is on the cytoplasmic side. A helical transmembrane segment spans residues 385–405 (FICFTLAFCQIWRAISVFALF). The Extracellular portion of the chain corresponds to 406–420 (YISNQFRTFPFSIKD). Residues 421–441 (QCIIFYSGVRGAGSFSLAFLL) constitute an intramembrane region (name=L). Residues 442 to 450 (PLSLFPRKK) are Extracellular-facing. The chain crosses the membrane as a helical span at residues 451–471 (MFVTATLVVIYFTVFIQGITV). Topologically, residues 472-798 (GPLVRYLDVK…RSHSPLLQKK (327 aa)) are cytoplasmic. Disordered regions lie at residues 662–690 (PYGNPQSAGRDTRAAGFSDDDSSDPGSPS) and 776–798 (RWTADHGHGRDHHRSHSPLLQKK). Residues 784-798 (GRDHHRSHSPLLQKK) are compositionally biased toward basic residues.

The protein belongs to the monovalent cation:proton antiporter 1 (CPA1) transporter (TC 2.A.36) family. In terms of assembly, homodimer; each protomer has one site for sodium and one site for proton binding. Interacts with CHP1 and CHP2. May be phosphorylated.

Its subcellular location is the basolateral cell membrane. The protein resides in the apical cell membrane. It localises to the zymogen granule membrane. It carries out the reaction Na(+)(in) + H(+)(out) = Na(+)(out) + H(+)(in). It catalyses the reaction Na(+)(out) + NH4(+)(in) = Na(+)(in) + NH4(+)(out). Its function is as follows. Electroneutral antiporter that exchanges sodium for protons or ammonium ions at the basolateral membrane of epithelia to regulate cell volume and intracellular pH upon hypertonic conditions. As part of transcellular ammonia transport in renal tubules, mediates basolateral ammonium extrusion in the medullary thick ascending limb, regulating the corticopapillary ammonium gradient and overall renal acid excretion. Mediates sodium:proton exchange in gastric parietal cells secondary to cAMP-dependent acid secretion and hyperosmolarity. Possibly coupled to chloride:bicarbonate antiporter, enables loading of parietal cells with sodium and chloride ions to maintain cell volume and normal gastric acid secretion. Functions as a sodium sensor in neurons of organum vasculosum of the lamina terminalis where it regulates water intake in response to increased sodium concentration in body fluids. The polypeptide is Sodium/hydrogen exchanger 4 (SLC9A4) (Homo sapiens (Human)).